The primary structure comprises 834 residues: DNA gyrase subunit A (834 aa).

The region spanning 34–500 is the Topo IIA-type catalytic domain; sequence LPDIRDGLKP…ADDIRDIEDI (467 aa). The O-(5'-phospho-DNA)-tyrosine intermediate role is filled by Y122. A GyrA-box motif is present at residues 527–533; sequence QRRGGHG. The tract at residues 810 to 834 is disordered; that stretch reads LSSNENDDEVLSGSEEECSDTVSLR. Residues 814–828 show a composition bias toward acidic residues; it reads ENDDEVLSGSEEECS.

Belongs to the type II topoisomerase GyrA/ParC subunit family. As to quaternary structure, heterotetramer, composed of two GyrA and two GyrB chains. In the heterotetramer, GyrA contains the active site tyrosine that forms a transient covalent intermediate with DNA, while GyrB binds cofactors and catalyzes ATP hydrolysis.

Its subcellular location is the cytoplasm. The enzyme catalyses ATP-dependent breakage, passage and rejoining of double-stranded DNA.. In terms of biological role, a type II topoisomerase that negatively supercoils closed circular double-stranded (ds) DNA in an ATP-dependent manner to modulate DNA topology and maintain chromosomes in an underwound state. Negative supercoiling favors strand separation, and DNA replication, transcription, recombination and repair, all of which involve strand separation. Also able to catalyze the interconversion of other topological isomers of dsDNA rings, including catenanes and knotted rings. Type II topoisomerases break and join 2 DNA strands simultaneously in an ATP-dependent manner. The polypeptide is DNA gyrase subunit A (Chlamydia pneumoniae (Chlamydophila pneumoniae)).